The following is a 440-amino-acid chain: MSEISQTVPELVAWARKNDFSISLPVDRLSFLLAVATLNGERLDGEMSEGELVDAFRHVSDAFEQTSETIGVRANNAINEMVRQRLLNRFTSEQAEGNAIYRLTPLGIGITDYYIRQREFSTLRLSMQLSIVAGELKRAADAAQEGGDEFHWHRNVYAPLKYSVAEIFDSIDLTQRIMDEQQQQVKDDIAQLLNKDWRAAISSCELLLSETSGTLRELQDTLEAAGDKLQANLLRIQDATMSHDDLHFVDRLVFDLQSKLDRIISWGQQSIDLWIGYDRHVHKFIRTAIDMDKNRVFAQRLRQSVQTYFDDPWALTYASADRLLDMRDEEMALRDDEVTGELPPDLEYEEFNEIREQLAAIIEEQLAIYKTRQTPLDLGLVVREYLAQYPRARHFDVARIVIDQAVRLGVAQADFTGLPAKWQPINDYGAKVQAHVIDKY.

The tract at residues 208–236 is leucine-zipper; the sequence is LSETSGTLRELQDTLEAAGDKLQANLLRI.

The protein belongs to the MukF family. In terms of assembly, interacts, and probably forms a ternary complex, with MukE and MukB via its C-terminal region. The complex formation is stimulated by calcium or magnesium. It is required for an interaction between MukE and MukB.

It is found in the cytoplasm. The protein localises to the nucleoid. In terms of biological role, involved in chromosome condensation, segregation and cell cycle progression. May participate in facilitating chromosome segregation by condensation DNA from both sides of a centrally located replisome during cell division. Not required for mini-F plasmid partitioning. Probably acts via its interaction with MukB and MukE. Overexpression results in anucleate cells. It has a calcium binding activity. The sequence is that of Chromosome partition protein MukF from Salmonella arizonae (strain ATCC BAA-731 / CDC346-86 / RSK2980).